The following is a 429-amino-acid chain: Glucose-1-phosphate adenylyltransferase (429 aa).

Alpha-D-glucose 1-phosphate is bound by residues Gly-162, 177–178 (EK), and Ser-209.

It belongs to the bacterial/plant glucose-1-phosphate adenylyltransferase family. As to quaternary structure, homotetramer.

The catalysed reaction is alpha-D-glucose 1-phosphate + ATP + H(+) = ADP-alpha-D-glucose + diphosphate. It functions in the pathway glycan biosynthesis; glycogen biosynthesis. With respect to regulation, activated by 3-phosphoglycerate and inhibited by phosphate. Its function is as follows. Involved in the biosynthesis of ADP-glucose, a building block required for the elongation reactions to produce glycogen. Catalyzes the reaction between ATP and alpha-D-glucose 1-phosphate (G1P) to produce pyrophosphate and ADP-Glc. The sequence is that of Glucose-1-phosphate adenylyltransferase from Nostoc sp. (strain PCC 7120 / SAG 25.82 / UTEX 2576).